The primary structure comprises 688 residues: NADH-ubiquinone oxidoreductase 75 kDa subunit (688 aa).

The region spanning 1-85 (MIIRFKINEI…DESIETEIDE (85 aa)) is the 2Fe-2S ferredoxin-type domain. Positions 38, 49, 52, and 66 each coordinate [2Fe-2S] cluster. The 40-residue stretch at 85–124 (EILKAREGVMEFLLINHPLDCPICDQGGECDLQEQTLAYG) folds into the 4Fe-4S His(Cys)3-ligated-type domain. [4Fe-4S] cluster is bound by residues H101, C105, C108, C114, C153, C156, C159, and C204. In terms of domain architecture, 4Fe-4S Mo/W bis-MGD-type spans 223–279 (LKNIKGIDIFDTLLTPINYQVKGGEIFRILPRINDRINEEWITDKVRFHYESYKIIE).

It belongs to the complex I 75 kDa subunit family. As to quaternary structure, complex I is composed of about 45 different subunits. [2Fe-2S] cluster serves as cofactor. It depends on [4Fe-4S] cluster as a cofactor.

The protein localises to the mitochondrion inner membrane. It catalyses the reaction a ubiquinone + NADH + 5 H(+)(in) = a ubiquinol + NAD(+) + 4 H(+)(out). Core subunit of the mitochondrial membrane respiratory chain NADH dehydrogenase (Complex I) that is believed to belong to the minimal assembly required for catalysis. Complex I functions in the transfer of electrons from NADH to the respiratory chain. The immediate electron acceptor for the enzyme is believed to be ubiquinone. This is the largest subunit of complex I and it is a component of the iron-sulfur (IP) fragment of the enzyme. It may form part of the active site crevice where NADH is oxidized. The chain is NADH-ubiquinone oxidoreductase 75 kDa subunit (nad11) from Dictyostelium discoideum (Social amoeba).